The following is a 340-amino-acid chain: 4-dimethylallyltryptophan N-methyltransferase easF (340 aa).

The protein belongs to the methyltransferase superfamily. Homodimer.

The enzyme catalyses 4-(3-methylbut-2-enyl)-L-tryptophan + S-adenosyl-L-methionine = 4-(3-methylbut-2-enyl)-L-abrine + S-adenosyl-L-homocysteine + H(+). It functions in the pathway alkaloid biosynthesis; ergot alkaloid biosynthesis. Functionally, 4-dimethylallyltryptophan N-methyltransferase; part of the gene cluster that mediates the biosynthesis of fungal ergot alkaloid. DmaW catalyzes the first step of ergot alkaloid biosynthesis by condensing dimethylallyl diphosphate (DMAP) and tryptophan to form 4-dimethylallyl-L-tryptophan. The second step is catalyzed by the methyltransferase easF that methylates 4-dimethylallyl-L-tryptophan in the presence of S-adenosyl-L-methionine, resulting in the formation of 4-dimethylallyl-L-abrine. The catalase easC and the FAD-dependent oxidoreductase easE then transform 4-dimethylallyl-L-abrine to chanoclavine-I which is further oxidized by easD in the presence of NAD(+), resulting in the formation of chanoclavine-I aldehyde. Chanoclavine-I aldehyde is the precursor of ergoamides and ergopeptines in Clavicipitaceae, and clavine-type alcaloids such as fumiclavine in Trichocomaceae. However, the metabolites downstream of chanoclavine-I aldehyde in Arthrodermataceae have not been identified yet. The protein is 4-dimethylallyltryptophan N-methyltransferase easF of Arthroderma benhamiae (strain ATCC MYA-4681 / CBS 112371) (Trichophyton mentagrophytes).